The chain runs to 327 residues: Protein UL95 homolog (327 aa).

It belongs to the herpesviridae UL95 family. As to quaternary structure, interacts with ORF24; this interaction may serve as a core scaffold for the assembly of the viral transcription initiation complex. Interacts with ORF66. Interacts with ORF18. Interacts with ORF23. Interacts with ORF31. Interacts with host EPAS1; this interaction stabilizes host EPAS1, ensuring its transcriptional activity.

It is found in the host nucleus. Its function is as follows. Participates in the expression of late viral mRNAs in part by interacting with ORF24. Expressed before viral DNA replication, assembles at the viral pre-replication complexes (pre-RCs) and thus serves as a hub for recruiting a viral transcription complex to ORF24 to promote late viral gene expression. Also plays a regulatory role in the viral life cycle by regulating host transcriptional regulators HIF1A and EPAS1. This is Protein UL95 homolog (ORF34) from Homo sapiens (Human).